The primary structure comprises 151 residues: UPF0756 membrane protein Aflv_0503 (151 aa).

4 helical membrane-spanning segments follow: residues 4-24 (FIFLFILLVIGMMAKNQSLII), 52-72 (LGVTIITIAVLVPIATGKIGF), 85-105 (WIAMLSGIAVALLAKGGVALL), and 115-135 (LVLGTILAVSLFKGVAVGPLI).

Belongs to the UPF0756 family.

Its subcellular location is the cell membrane. The sequence is that of UPF0756 membrane protein Aflv_0503 from Anoxybacillus flavithermus (strain DSM 21510 / WK1).